The primary structure comprises 419 residues: MIFDKVNYKEFDKEVWEAIQAEEKRQQNNIELIASENVVSKAVMAAQGSILTNKYAEGYPGRRYYGGTECVDVVESLAIERAKEIFGAKFANVQPHSGSQANCAAYMALIEPGDTVMGMDLAAGGHLTHGASVSFSGQTYNFVAYNVDEETGLLDYDAILKQAKEVQPKLIVAGASAYARTIDFAKFREIADAVGAKLMVDMAHIAGLVAAGLHPNPVPHAHITTTTTHKTLRGPRGGLILTNDEELIKKINSAIFPGIQGGPLEHVIAAKAVSFKEVLDPAFKDYAQKVIENSKAMAEVFLANPNFKVITGGTDNHLFLVDVTKVVENGKVAQHLLDEVNITLNKNSIPYEKLSPFKTSGIRIGSAAITARGFGVEEARKVAQLTIKALENAENEKALEEVRQEVRALTDQFPLYEGL.

(6S)-5,6,7,8-tetrahydrofolate-binding positions include L121 and 125–127 (GHL). An N6-(pyridoxal phosphate)lysine modification is found at K230. Residues E246 and 355–357 (SPF) contribute to the (6S)-5,6,7,8-tetrahydrofolate site.

Belongs to the SHMT family. In terms of assembly, homodimer. Pyridoxal 5'-phosphate serves as cofactor.

It is found in the cytoplasm. It carries out the reaction (6R)-5,10-methylene-5,6,7,8-tetrahydrofolate + glycine + H2O = (6S)-5,6,7,8-tetrahydrofolate + L-serine. The protein operates within one-carbon metabolism; tetrahydrofolate interconversion. It functions in the pathway amino-acid biosynthesis; glycine biosynthesis; glycine from L-serine: step 1/1. Functionally, catalyzes the reversible interconversion of serine and glycine with tetrahydrofolate (THF) serving as the one-carbon carrier. This reaction serves as the major source of one-carbon groups required for the biosynthesis of purines, thymidylate, methionine, and other important biomolecules. Also exhibits THF-independent aldolase activity toward beta-hydroxyamino acids, producing glycine and aldehydes, via a retro-aldol mechanism. The chain is Serine hydroxymethyltransferase from Streptococcus suis (strain 98HAH33).